A 234-amino-acid polypeptide reads, in one-letter code: PHD finger protein ING1 (234 aa).

Residues 129–166 (NNGKAGNAGEGGRGGRKKTRLATAASTAAASTGMTSSN) form a disordered region. A compositionally biased stretch (low complexity) spans 149–165 (LATAASTAAASTGMTSS). A PHD-type zinc finger spans residues 178 to 227 (PTYCICNQVSFGEMVACDNNACKIEWFHFGCVGLKEQPKGKWYCPECATV). Zn(2+)-binding residues include Cys-181, Cys-183, Cys-194, Cys-199, His-205, Cys-208, Cys-221, and Cys-224.

This sequence belongs to the ING family. In terms of assembly, interacts with H3K4me3 and to a lesser extent with H3K4me2. As to expression, ubiquitously expressed.

It localises to the nucleus. Functionally, histone-binding component that specifically recognizes H3 tails trimethylated on 'Lys-4' (H3K4me3), which mark transcription start sites of virtually all active genes. This is PHD finger protein ING1 (ING1) from Arabidopsis thaliana (Mouse-ear cress).